The chain runs to 196 residues: MYLIPTVIEQTNRGERAYDIYSRLLKDRIIFLGSPIDDQVANSIVSQLLFLAAEDPEKDISLYINSPGGSITAGLAIYDTMQFIKPDVSTICIGMAASMGAFLLAAGAKGKRFALPNSEVMIHQPLGGAQGQATEIEIAAKRILFLRDKLNRILAENTGQPIEVIERDTDRDNFMTAQKAQEYGIIDRVLTRLEDK.

Ser-98 acts as the Nucleophile in catalysis. His-123 is an active-site residue.

Belongs to the peptidase S14 family. As to quaternary structure, fourteen ClpP subunits assemble into 2 heptameric rings which stack back to back to give a disk-like structure with a central cavity, resembling the structure of eukaryotic proteasomes.

The protein resides in the cytoplasm. It catalyses the reaction Hydrolysis of proteins to small peptides in the presence of ATP and magnesium. alpha-casein is the usual test substrate. In the absence of ATP, only oligopeptides shorter than five residues are hydrolyzed (such as succinyl-Leu-Tyr-|-NHMec, and Leu-Tyr-Leu-|-Tyr-Trp, in which cleavage of the -Tyr-|-Leu- and -Tyr-|-Trp bonds also occurs).. In terms of biological role, cleaves peptides in various proteins in a process that requires ATP hydrolysis. Has a chymotrypsin-like activity. Plays a major role in the degradation of misfolded proteins. The sequence is that of ATP-dependent Clp protease proteolytic subunit from Geobacillus thermodenitrificans (strain NG80-2).